The following is a 52-amino-acid chain: Defensin D2 (52 aa).

Cystine bridges form between Cys8-Cys52, Cys19-Cys39, Cys25-Cys46, and Cys29-Cys48.

In terms of tissue distribution, distributed in the epidermal cell layer of leaves and in the subepidermal layer region of stems. Not in roots.

The protein resides in the secreted. Its subcellular location is the cell wall. Functionally, antimicrobial peptide. Active against Fusarium spp., Gram-positive and Gram-negative bacterial pathogens. The chain is Defensin D2 from Spinacia oleracea (Spinach).